The primary structure comprises 273 residues: Dermonecrotic toxin LsaSicTox-alphaIB1avi (273 aa).

Histidine 5 is an active-site residue. Residues glutamate 25 and aspartate 27 each contribute to the Mg(2+) site. Residue histidine 41 is the Nucleophile of the active site. 2 disulfide bridges follow: cysteine 45–cysteine 51 and cysteine 47–cysteine 190. Aspartate 85 is a binding site for Mg(2+).

The protein belongs to the arthropod phospholipase D family. Class II subfamily. Mg(2+) is required as a cofactor. As to expression, expressed by the venom gland.

It localises to the secreted. It catalyses the reaction an N-(acyl)-sphingosylphosphocholine = an N-(acyl)-sphingosyl-1,3-cyclic phosphate + choline. The enzyme catalyses an N-(acyl)-sphingosylphosphoethanolamine = an N-(acyl)-sphingosyl-1,3-cyclic phosphate + ethanolamine. The catalysed reaction is a 1-acyl-sn-glycero-3-phosphocholine = a 1-acyl-sn-glycero-2,3-cyclic phosphate + choline. It carries out the reaction a 1-acyl-sn-glycero-3-phosphoethanolamine = a 1-acyl-sn-glycero-2,3-cyclic phosphate + ethanolamine. In terms of biological role, dermonecrotic toxins cleave the phosphodiester linkage between the phosphate and headgroup of certain phospholipids (sphingolipid and lysolipid substrates), forming an alcohol (often choline) and a cyclic phosphate. This toxin acts on sphingomyelin (SM). It may also act on ceramide phosphoethanolamine (CPE), lysophosphatidylcholine (LPC) and lysophosphatidylethanolamine (LPE), but not on lysophosphatidylserine (LPS), and lysophosphatidylglycerol (LPG). It acts by transphosphatidylation, releasing exclusively cyclic phosphate products as second products. Induces dermonecrosis, hemolysis, increased vascular permeability, edema, inflammatory response, and platelet aggregation. The chain is Dermonecrotic toxin LsaSicTox-alphaIB1avi from Loxosceles sabina (Tucson recluse spider).